Consider the following 587-residue polypeptide: Cyclic di-GMP phosphodiesterase PA2567 (587 aa).

In terms of domain architecture, GAF spans 28 to 157 (DEVFEEILAA…LEHFARLVMA (130 aa)). Positions 192-327 (GALTVIAADL…GVGWARYNPP (136 aa)) constitute a GGDEF domain. The EAL domain maps to 335 to 587 (AFTLLTSLSQ…PEQLEDWLRR (253 aa)).

The enzyme catalyses 3',3'-c-di-GMP + H2O = 5'-phosphoguanylyl(3'-&gt;5')guanosine + H(+). Its function is as follows. Phosphodiesterase (PDE) that catalyzes the hydrolysis of cyclic diguanylate (c-di-GMP) to 5'-pGpG. The protein is Cyclic di-GMP phosphodiesterase PA2567 of Pseudomonas aeruginosa (strain ATCC 15692 / DSM 22644 / CIP 104116 / JCM 14847 / LMG 12228 / 1C / PRS 101 / PAO1).